The chain runs to 584 residues: Aspartate--tRNA(Asp/Asn) ligase (584 aa).

Glutamate 173 lines the L-aspartate pocket. The interval 197–200 (QLFK) is aspartate. Arginine 219 lines the L-aspartate pocket. Residues 219-221 (RDE) and glutamine 228 each bind ATP. Histidine 446 provides a ligand contact to L-aspartate. Glutamate 476 contributes to the ATP binding site. Residue arginine 483 participates in L-aspartate binding. 528–531 (GLDR) serves as a coordination point for ATP.

The protein belongs to the class-II aminoacyl-tRNA synthetase family. Type 1 subfamily. As to quaternary structure, homodimer.

Its subcellular location is the cytoplasm. The enzyme catalyses tRNA(Asx) + L-aspartate + ATP = L-aspartyl-tRNA(Asx) + AMP + diphosphate. Functionally, aspartyl-tRNA synthetase with relaxed tRNA specificity since it is able to aspartylate not only its cognate tRNA(Asp) but also tRNA(Asn). Reaction proceeds in two steps: L-aspartate is first activated by ATP to form Asp-AMP and then transferred to the acceptor end of tRNA(Asp/Asn). The chain is Aspartate--tRNA(Asp/Asn) ligase from Sulfurovum sp. (strain NBC37-1).